The chain runs to 221 residues: Phosphoribosylformylglycinamidine synthase subunit PurQ (221 aa).

The Glutamine amidotransferase type-1 domain maps to 8 to 221 (NVGIIRFPGT…GLKFFKSFLD (214 aa)). The active-site Nucleophile is the Cys91. Active-site residues include His198 and Glu200.

In terms of assembly, part of the FGAM synthase complex composed of 1 PurL, 1 PurQ and 2 PurS subunits.

It localises to the cytoplasm. It catalyses the reaction N(2)-formyl-N(1)-(5-phospho-beta-D-ribosyl)glycinamide + L-glutamine + ATP + H2O = 2-formamido-N(1)-(5-O-phospho-beta-D-ribosyl)acetamidine + L-glutamate + ADP + phosphate + H(+). The catalysed reaction is L-glutamine + H2O = L-glutamate + NH4(+). The protein operates within purine metabolism; IMP biosynthesis via de novo pathway; 5-amino-1-(5-phospho-D-ribosyl)imidazole from N(2)-formyl-N(1)-(5-phospho-D-ribosyl)glycinamide: step 1/2. Functionally, part of the phosphoribosylformylglycinamidine synthase complex involved in the purines biosynthetic pathway. Catalyzes the ATP-dependent conversion of formylglycinamide ribonucleotide (FGAR) and glutamine to yield formylglycinamidine ribonucleotide (FGAM) and glutamate. The FGAM synthase complex is composed of three subunits. PurQ produces an ammonia molecule by converting glutamine to glutamate. PurL transfers the ammonia molecule to FGAR to form FGAM in an ATP-dependent manner. PurS interacts with PurQ and PurL and is thought to assist in the transfer of the ammonia molecule from PurQ to PurL. In Methanosphaera stadtmanae (strain ATCC 43021 / DSM 3091 / JCM 11832 / MCB-3), this protein is Phosphoribosylformylglycinamidine synthase subunit PurQ.